A 285-amino-acid chain; its full sequence is Probable enoyl-CoA hydratase echA12 (285 aa).

Belongs to the enoyl-CoA hydratase/isomerase family.

It catalyses the reaction a (3S)-3-hydroxyacyl-CoA = a (2E)-enoyl-CoA + H2O. The enzyme catalyses a 4-saturated-(3S)-3-hydroxyacyl-CoA = a (3E)-enoyl-CoA + H2O. Its function is as follows. Could possibly oxidize fatty acids using specific components. The chain is Probable enoyl-CoA hydratase echA12 (echA12) from Mycobacterium tuberculosis (strain CDC 1551 / Oshkosh).